A 123-amino-acid chain; its full sequence is Ribonuclease P protein component (123 aa).

Belongs to the RnpA family. As to quaternary structure, consists of a catalytic RNA component (M1 or rnpB) and a protein subunit.

The enzyme catalyses Endonucleolytic cleavage of RNA, removing 5'-extranucleotides from tRNA precursor.. Functionally, RNaseP catalyzes the removal of the 5'-leader sequence from pre-tRNA to produce the mature 5'-terminus. It can also cleave other RNA substrates such as 4.5S RNA. The protein component plays an auxiliary but essential role in vivo by binding to the 5'-leader sequence and broadening the substrate specificity of the ribozyme. This Streptococcus pneumoniae (strain JJA) protein is Ribonuclease P protein component.